Here is a 510-residue protein sequence, read N- to C-terminus: Serine carboxypeptidase-like 48 (510 aa).

The signal sequence occupies residues 1–25 (MDSKTTFLTFLLCIFIFSHFSPSTS). 3 cysteine pairs are disulfide-bonded: Cys141-Cys383, Cys309-Cys326, and Cys349-Cys354. 2 N-linked (GlcNAc...) asparagine glycosylation sites follow: Asn158 and Asn159. The active site involves Ser231. Catalysis depends on residues Asp421 and His478.

The protein belongs to the peptidase S10 family. In terms of tissue distribution, ubiquitous.

The protein localises to the secreted. Its function is as follows. Probable carboxypeptidase. This chain is Serine carboxypeptidase-like 48 (SCPL48), found in Arabidopsis thaliana (Mouse-ear cress).